A 462-amino-acid polypeptide reads, in one-letter code: Asparagine--tRNA ligase (462 aa).

Belongs to the class-II aminoacyl-tRNA synthetase family. In terms of assembly, homodimer.

It localises to the cytoplasm. It catalyses the reaction tRNA(Asn) + L-asparagine + ATP = L-asparaginyl-tRNA(Asn) + AMP + diphosphate + H(+). This is Asparagine--tRNA ligase from Synechocystis sp. (strain ATCC 27184 / PCC 6803 / Kazusa).